The sequence spans 155 residues: Large ribosomal subunit protein uL16 (155 aa).

Belongs to the universal ribosomal protein uL16 family. As to quaternary structure, part of the 50S ribosomal subunit.

Its function is as follows. Binds 23S rRNA and is also seen to make contacts with the A and possibly P site tRNAs. The sequence is that of Large ribosomal subunit protein uL16 from Synechococcus sp. (strain CC9311).